We begin with the raw amino-acid sequence, 193 residues long: Xanthine phosphoribosyltransferase (193 aa).

Residues Leu-20 and Thr-27 each contribute to the xanthine site. 128 to 132 contacts 5-phospho-alpha-D-ribose 1-diphosphate; it reads ANGQA. Residue Lys-156 participates in xanthine binding.

Belongs to the purine/pyrimidine phosphoribosyltransferase family. Xpt subfamily. Homodimer.

It is found in the cytoplasm. The catalysed reaction is XMP + diphosphate = xanthine + 5-phospho-alpha-D-ribose 1-diphosphate. Its pathway is purine metabolism; XMP biosynthesis via salvage pathway; XMP from xanthine: step 1/1. Its function is as follows. Converts the preformed base xanthine, a product of nucleic acid breakdown, to xanthosine 5'-monophosphate (XMP), so it can be reused for RNA or DNA synthesis. The chain is Xanthine phosphoribosyltransferase from Streptococcus uberis (strain ATCC BAA-854 / 0140J).